A 42-amino-acid chain; its full sequence is Potassium channel toxin gamma-KTx 1.6 (42 aa).

4 disulfide bridges follow: C5-C23, C11-C34, C20-C39, and C24-C41.

It belongs to the ergtoxin family. Gamma-KTx 1 subfamily. As to expression, expressed by the venom gland.

The protein resides in the secreted. In terms of biological role, blocks Kv11/ERG potassium channels. The polypeptide is Potassium channel toxin gamma-KTx 1.6 (Centruroides exilicauda (Bark scorpion)).